The primary structure comprises 367 residues: Chorismate synthase (367 aa).

NADP(+) is bound at residue Arg48. FMN contacts are provided by residues 125–127 (RSS), Gly283, 298–302 (KPTPS), and Arg324.

The protein belongs to the chorismate synthase family. As to quaternary structure, homotetramer. Requires FMNH2 as cofactor.

It catalyses the reaction 5-O-(1-carboxyvinyl)-3-phosphoshikimate = chorismate + phosphate. Its pathway is metabolic intermediate biosynthesis; chorismate biosynthesis; chorismate from D-erythrose 4-phosphate and phosphoenolpyruvate: step 7/7. Its function is as follows. Catalyzes the anti-1,4-elimination of the C-3 phosphate and the C-6 proR hydrogen from 5-enolpyruvylshikimate-3-phosphate (EPSP) to yield chorismate, which is the branch point compound that serves as the starting substrate for the three terminal pathways of aromatic amino acid biosynthesis. This reaction introduces a second double bond into the aromatic ring system. The polypeptide is Chorismate synthase (Agathobacter rectalis (strain ATCC 33656 / DSM 3377 / JCM 17463 / KCTC 5835 / VPI 0990) (Eubacterium rectale)).